We begin with the raw amino-acid sequence, 1372 residues long: DNA-directed RNA polymerase subunit beta' (1372 aa).

Residues C69, C71, C84, and C87 each contribute to the Zn(2+) site. 3 residues coordinate Mg(2+): D460, D462, and D464. C808, C882, C889, and C892 together coordinate Zn(2+).

It belongs to the RNA polymerase beta' chain family. As to quaternary structure, the RNAP catalytic core consists of 2 alpha, 1 beta, 1 beta' and 1 omega subunit. When a sigma factor is associated with the core the holoenzyme is formed, which can initiate transcription. It depends on Mg(2+) as a cofactor. Zn(2+) serves as cofactor.

It carries out the reaction RNA(n) + a ribonucleoside 5'-triphosphate = RNA(n+1) + diphosphate. In terms of biological role, DNA-dependent RNA polymerase catalyzes the transcription of DNA into RNA using the four ribonucleoside triphosphates as substrates. The polypeptide is DNA-directed RNA polymerase subunit beta' (Rickettsia rickettsii (strain Iowa)).